Consider the following 71-residue polypeptide: Prokaryotic ubiquitin-like protein Pup (71 aa).

Residues 1 to 18 (MATRDSGGQSQTGRSQQG) show a composition bias toward low complexity. The segment at 1 to 42 (MATRDSGGQSQTGRSQQGEEIEDVTTEASAEAAERHAEITED) is disordered. Positions 27–65 (EASAEAAERHAEITEDVDDLLDEIDSVLEENAEEFVRGY) are ARC ATPase binding. Residues 29–60 (SAEAAERHAEITEDVDDLLDEIDSVLEENAEE) are a coiled coil. Glutamate 71 is covalently cross-linked (Isoglutamyl lysine isopeptide (Glu-Lys) (interchain with K-? in acceptor proteins)).

This sequence belongs to the prokaryotic ubiquitin-like protein family. Strongly interacts with the proteasome-associated ATPase ARC through a hydrophobic interface; the interacting region of Pup lies in its C-terminal half. There is one Pup binding site per ARC hexamer ring.

It participates in protein degradation; proteasomal Pup-dependent pathway. Protein modifier that is covalently attached to lysine residues of substrate proteins, thereby targeting them for proteasomal degradation. The tagging system is termed pupylation. The sequence is that of Prokaryotic ubiquitin-like protein Pup from Salinispora tropica (strain ATCC BAA-916 / DSM 44818 / JCM 13857 / NBRC 105044 / CNB-440).